Reading from the N-terminus, the 224-residue chain is BOS complex subunit TMEM147 (224 aa).

A helical transmembrane segment spans residues 1 to 21 (MTLFHFGNCFALAYFPYFITY). Over 22-34 (KCSGLSEYNAFWK) the chain is Cytoplasmic. A helical transmembrane segment spans residues 35 to 58 (CVQAGVTYLFVQLCKMLFLATFFP). The Lumenal portion of the chain corresponds to 59 to 66 (TWEGGIYD). A helical transmembrane segment spans residues 67–88 (FIGEFMKASVDVADLIGLNLVM). Over 89 to 98 (SRNAGKGEYK) the chain is Cytoplasmic. The helical transmembrane segment at 99 to 124 (IMVAALGWATAELIMSRCIPLWVGAR) threads the bilayer. At 125-129 (GIEFD) the chain is on the lumenal side. The chain crosses the membrane as a helical span at residues 130–155 (WKYIQMSIDSNISLVHYIVASAQVWM). At 156–164 (ITRYDLYHT) the chain is on the cytoplasmic side. The chain crosses the membrane as a helical span at residues 165–187 (FRPAVLLLMFLSVYKAFVMETFV). At 188 to 194 (HLCSLGS) the chain is on the lumenal side. A helical membrane pass occupies residues 195 to 216 (WTALLARAVVTGLLALSTLALY). Residues 217 to 224 (VAVVNVHS) lie on the Cytoplasmic side of the membrane.

It belongs to the TMEM147 family. Component of the back of Sec61 (BOS) complex, composed of NCLN/Nicalin, NOMO1 and TMEM147. The BOS complex is part of the multi-pass translocon (MPT) complex, composed of three subcomplexes, the GEL complex (composed of RAB5IF/OPTI and TMCO1), the BOS complex (composed of NCLN/Nicalin, NOMO1 and TMEM147) and the PAT complex (composed of WDR83OS/Asterix and CCDC47). The MPT complex associates with the SEC61 complex. Interacts with CHRM3, CHRM1 and AVPR2. Interacts with LBR; promoting LBR localization to the nucleus inner membrane. Interacts with DHCR7.

The protein localises to the endoplasmic reticulum membrane. The protein resides in the nucleus membrane. It is found in the cell membrane. Functionally, component of the multi-pass translocon (MPT) complex that mediates insertion of multi-pass membrane proteins into the lipid bilayer of membranes. The MPT complex takes over after the SEC61 complex: following membrane insertion of the first few transmembrane segments of proteins by the SEC61 complex, the MPT complex occludes the lateral gate of the SEC61 complex to promote insertion of subsequent transmembrane regions. Also acts as a negative regulator of CHRM3 function, most likely by interfering with its trafficking to the cell membrane. Negatively regulates CHRM3-mediated calcium mobilization and activation of RPS6KA1/p90RSK activity. Regulates LBR localization to the nucleus inner membrane. In Canis lupus familiaris (Dog), this protein is BOS complex subunit TMEM147.